Consider the following 295-residue polypeptide: Protoheme IX farnesyltransferase (295 aa).

9 consecutive transmembrane segments (helical) span residues 31 to 51, 54 to 74, 98 to 118, 121 to 141, 147 to 167, 173 to 193, 220 to 240, 245 to 265, and 273 to 293; these read GLVM…IGAA, VLTV…NCYL, FVAL…LSLA, GLTA…YTPM, TALF…WTSV, AGGL…FLAI, LWMA…VPLG, GYAI…ISGI, and ARTF…ALFL.

This sequence belongs to the UbiA prenyltransferase family. Protoheme IX farnesyltransferase subfamily.

It is found in the cell inner membrane. The enzyme catalyses heme b + (2E,6E)-farnesyl diphosphate + H2O = Fe(II)-heme o + diphosphate. Its pathway is porphyrin-containing compound metabolism; heme O biosynthesis; heme O from protoheme: step 1/1. In terms of biological role, converts heme B (protoheme IX) to heme O by substitution of the vinyl group on carbon 2 of heme B porphyrin ring with a hydroxyethyl farnesyl side group. The sequence is that of Protoheme IX farnesyltransferase from Anaeromyxobacter dehalogenans (strain 2CP-C).